Consider the following 129-residue polypeptide: Phosphoribosyl-AMP cyclohydrolase (129 aa).

D82 is a binding site for Mg(2+). Position 83 (C83) interacts with Zn(2+). D84 and D86 together coordinate Mg(2+). Positions 99 and 106 each coordinate Zn(2+).

It belongs to the PRA-CH family. In terms of assembly, homodimer. Mg(2+) serves as cofactor. It depends on Zn(2+) as a cofactor.

The protein resides in the cytoplasm. It carries out the reaction 1-(5-phospho-beta-D-ribosyl)-5'-AMP + H2O = 1-(5-phospho-beta-D-ribosyl)-5-[(5-phospho-beta-D-ribosylamino)methylideneamino]imidazole-4-carboxamide. Its pathway is amino-acid biosynthesis; L-histidine biosynthesis; L-histidine from 5-phospho-alpha-D-ribose 1-diphosphate: step 3/9. Functionally, catalyzes the hydrolysis of the adenine ring of phosphoribosyl-AMP. The polypeptide is Phosphoribosyl-AMP cyclohydrolase (Methanosarcina barkeri (strain Fusaro / DSM 804)).